The chain runs to 43 residues: Protein PsbN (43 aa).

A helical membrane pass occupies residues 7 to 27 (LIVAIAAVTICITAFAIYTAF).

This sequence belongs to the PsbN family.

It is found in the cellular thylakoid membrane. Its function is as follows. May play a role in photosystem I and II biogenesis. In Synechococcus sp. (strain JA-2-3B'a(2-13)) (Cyanobacteria bacterium Yellowstone B-Prime), this protein is Protein PsbN.